The primary structure comprises 330 residues: MPAGHEEFDIPFPSRVNPFHARAEDRHVAWMRAMGLITGDAAEATYRRWSPAKVGARWFYLAQGEDLDLGCDIFGWFFAYDDHFDGPTGTDPRQTAAFVNRTVAMLDPRADPTGEHPLNIAFHDLWQRESAPMSPLWQRRAVDHWTQYLTAHITEATNRTRHTSPTIADYLELRHRTGFMPPLLDLIERVWRAEIPAPVYTTPEVQTLLHTTNQNINIVNDVLSLEKEEAHGDPHNLVLVIQHERQSTRQQALATARRMIDEWTDTFIRTEPRLPALCGRLGIPLADRTSLYTAVEGMRAAIRGNYDWCAETNRYAVHRPTGTGRATTPW.

Position 81 (D81) interacts with Mg(2+). A DDXXD motif motif is present at residues 81-85 (DDHFD). R174 provides a ligand contact to substrate. N220 and S224 together coordinate Mg(2+). The NXXXSXXXE motif motif lies at 220–228 (NDVLSLEKE). K227 lines the substrate pocket. E228 contacts Mg(2+). Residue 314–315 (RY) coordinates substrate.

It belongs to the terpene synthase family. Homodimer. Requires Mg(2+) as cofactor.

The catalysed reaction is (2E)-geranyl diphosphate + H2O = 1,8-cineole + diphosphate. The enzyme catalyses neryl diphosphate + H2O = 1,8-cineole + diphosphate. In vitro, catalyzes the formation of 1,8-cineole from geranyl diphosphate (GPP). Can also accept neryl diphosphate (NPP) as substrate to produce 1,8-cineole. The chain is 1,8-cineole synthase from Streptomyces clavuligerus.